We begin with the raw amino-acid sequence, 464 residues long: 3-isopropylmalate dehydratase large subunit (464 aa).

Positions 337, 397, and 400 each coordinate [4Fe-4S] cluster.

Belongs to the aconitase/IPM isomerase family. LeuC type 1 subfamily. In terms of assembly, heterodimer of LeuC and LeuD. [4Fe-4S] cluster is required as a cofactor.

It catalyses the reaction (2R,3S)-3-isopropylmalate = (2S)-2-isopropylmalate. The protein operates within amino-acid biosynthesis; L-leucine biosynthesis; L-leucine from 3-methyl-2-oxobutanoate: step 2/4. Its function is as follows. Catalyzes the isomerization between 2-isopropylmalate and 3-isopropylmalate, via the formation of 2-isopropylmaleate. This Bacillus cereus (strain AH820) protein is 3-isopropylmalate dehydratase large subunit.